We begin with the raw amino-acid sequence, 340 residues long: Phenylalanine--tRNA ligase alpha subunit (340 aa).

Position 255 (E255) interacts with Mg(2+).

It belongs to the class-II aminoacyl-tRNA synthetase family. Phe-tRNA synthetase alpha subunit type 1 subfamily. As to quaternary structure, tetramer of two alpha and two beta subunits. It depends on Mg(2+) as a cofactor.

It is found in the cytoplasm. It catalyses the reaction tRNA(Phe) + L-phenylalanine + ATP = L-phenylalanyl-tRNA(Phe) + AMP + diphosphate + H(+). This chain is Phenylalanine--tRNA ligase alpha subunit, found in Exiguobacterium sp. (strain ATCC BAA-1283 / AT1b).